We begin with the raw amino-acid sequence, 150 residues long: MNTCIQLLILCLVTLTNSENLTDISTETTIENEKEDVTETELLETIENETETVTETELPETIGTEIPAEALNLPQSPKQKYCKSEGQYCSRTIFHRCCGNLVCQLHGFFNGTCVQCLAERKFCIWSSECCSKRCRLFRCRKNPYVQVIPY.

The N-terminal stretch at 1–18 is a signal peptide; the sequence is MNTCIQLLILCLVTLTNS. N-linked (GlcNAc...) asparagine glycans are attached at residues Asn-20, Asn-48, and Asn-110. 3 cysteine pairs are disulfide-bonded: Cys-116–Cys-130, Cys-123–Cys-134, and Cys-129–Cys-139.

This sequence belongs to the UPF0506 family.

Its subcellular location is the secreted. In Schistosoma japonicum (Blood fluke), this protein is UPF0506 protein SJCHGC03047.